Here is a 437-residue protein sequence, read N- to C-terminus: Epsilon-sarcoglycan (437 aa).

Residues 1 to 317 lie on the Extracellular side of the membrane; sequence MQLPRWWELG…LKSRDYYTDF (317 aa). An N-linked (GlcNAc...) asparagine glycan is attached at Asn200. The chain crosses the membrane as a helical span at residues 318–338; the sequence is LITLAVPSAVALVLFLILAYI. The Cytoplasmic segment spans residues 339 to 437; it reads MCCRREGVEK…QQQTTGKWYP (99 aa).

The protein belongs to the sarcoglycan alpha/epsilon family. Post-translationally, N-glycosylated. In terms of processing, ubiquitinated, leading to its degradation by the proteasome.

The protein resides in the cell membrane. It localises to the sarcolemma. Its subcellular location is the cytoplasm. It is found in the cytoskeleton. The protein localises to the cell projection. The protein resides in the dendrite. It localises to the golgi apparatus. Component of the sarcoglycan complex, a subcomplex of the dystrophin-glycoprotein complex which forms a link between the F-actin cytoskeleton and the extracellular matrix. The chain is Epsilon-sarcoglycan from Pongo abelii (Sumatran orangutan).